A 657-amino-acid chain; its full sequence is Glycogen debranching enzyme (657 aa).

Asp-336 acts as the Nucleophile in catalysis. Glu-371 functions as the Proton donor in the catalytic mechanism. The segment covering Asn-458–Asp-467 has biased composition (basic and acidic residues). The segment at Asn-458–Lys-479 is disordered.

Belongs to the glycosyl hydrolase 13 family.

The catalysed reaction is Hydrolysis of (1-&gt;6)-alpha-D-glucosidic linkages to branches with degrees of polymerization of three or four glucose residues in limit dextrin.. The protein operates within glycan degradation; glycogen degradation. Functionally, removes maltotriose and maltotetraose chains that are attached by 1,6-alpha-linkage to the limit dextrin main chain, generating a debranched limit dextrin. In Shigella sonnei (strain Ss046), this protein is Glycogen debranching enzyme.